A 210-amino-acid chain; its full sequence is High mobility group protein B2 (210 aa).

N6-acetyllysine is present on Lys-3. A DNA-binding region (HMG box 1) is located at residues 9-79 (PRGKMSSYAF…RYDREMKNYV (71 aa)). Cys-23 is subject to Cysteine sulfonic acid (-SO3H); alternate. Cys-23 and Cys-45 are joined by a disulfide. Position 30 is an N6-acetyllysine (Lys-30). Ser-35 is modified (phosphoserine). The residue at position 43 (Lys-43) is an N6-acetyllysine. At Cys-45 the chain carries Cysteine sulfonic acid (-SO3H); alternate. A compositionally biased stretch (basic and acidic residues) spans 51 to 76 (TMSAKEKSKFEDLAKSDKARYDREMK). Positions 51 to 102 (TMSAKEKSKFEDLAKSDKARYDREMKNYVPPKGDKKGKKKDPNAPKRPPSAF) are disordered. Lys-90 carries the N6-acetyllysine modification. Residues 95-163 (PKRPPSAFFL…KYEKDIAAYR (69 aa)) constitute a DNA-binding region (HMG box 2). The residue at position 100 (Ser-100) is a Phosphoserine. Cys-106 bears the Cysteine sulfonic acid (-SO3H) mark. Residues Lys-114 and Lys-141 each carry the N6-acetyllysine modification. The segment covering 162–172 (YRAKGKSEVGK) has biased composition (basic and acidic residues). The interval 162–210 (YRAKGKSEVGKKGPGRPTGSKKKNEPEDEEEEEEEEDDEDEEEEDEDEE) is disordered. The interval 165–180 (KGKSEVGKKGPGRPTG) is required for chemotactic activity. Positions 187-210 (PEDEEEEEEEEDDEDEEEEDEDEE) are enriched in acidic residues.

The protein belongs to the HMGB family. Interacts with POU2F2, POU2F1 and POU3F1. Component of the RAG complex composed of core components RAG1 and RAG2, and associated component HMGB1 or HMGB2. Component of the SET complex, composed of at least ANP32A, APEX1, HMGB2, NME1, SET and TREX1. Directly interacts with SET. Interacts with LEF1. Post-translationally, reduction/oxidation of cysteine residues Cys-23, Cys-45 and Cys-106 and a possible intramolecular disulfide bond involving Cys-23 and Cys-45 give rise to different redox forms with specific functional activities in various cellular compartments: 1- fully reduced HMGB2 (HMGB2C23hC45hC106h), 2- disulfide HMGB2 (HMGB2C23-C45C106h) and 3- sulfonyl HMGB2 (HMGB2C23soC45soC106so).

It localises to the nucleus. Its subcellular location is the chromosome. The protein resides in the cytoplasm. The protein localises to the secreted. Multifunctional protein with various roles in different cellular compartments. May act in a redox sensitive manner. In the nucleus is an abundant chromatin-associated non-histone protein involved in transcription, chromatin remodeling and V(D)J recombination and probably other processes. Binds DNA with a preference to non-canonical DNA structures such as single-stranded DNA. Can bent DNA and enhance DNA flexibility by looping thus providing a mechanism to promote activities on various gene promoters by enhancing transcription factor binding and/or bringing distant regulatory sequences into close proximity. Involved in V(D)J recombination by acting as a cofactor of the RAG complex: acts by stimulating cleavage and RAG protein binding at the 23 bp spacer of conserved recombination signal sequences (RSS). Proposed to be involved in the innate immune response to nucleic acids by acting as a cytoplasmic promiscuous immunogenic DNA/RNA sensor which cooperates with subsequent discriminative sensing by specific pattern recognition receptors. In the extracellular compartment acts as a chemokine. Promotes proliferation and migration of endothelial cells implicating AGER/RAGE. Has antimicrobial activity in gastrointestinal epithelial tissues. Involved in inflammatory response to antigenic stimulus coupled with pro-inflammatory activity. May play a role in germ cell differentiation. Involved in modulation of neurogenesis probably by regulation of neural stem proliferation. Involved in articular cartilage surface maintenance implicating LEF1 and the Wnt/beta-catenin pathway. The protein is High mobility group protein B2 (Hmgb2) of Rattus norvegicus (Rat).